Here is a 436-residue protein sequence, read N- to C-terminus: Adenylosuccinate synthetase (436 aa).

GTP-binding positions include 12-18 and 40-42; these read GDEGKGK and GHT. The active-site Proton acceptor is the aspartate 13. Residues aspartate 13 and glycine 40 each contribute to the Mg(2+) site. Residues 13–16, 38–41, threonine 128, arginine 142, glutamine 223, threonine 238, and arginine 302 each bind IMP; these read DEGK and NAGH. Catalysis depends on histidine 41, which acts as the Proton donor. Substrate is bound at residue 298–304; sequence TTTGRRR. Residues arginine 304, 330-332, and 412-414 each bind GTP; these read KLD and SLG.

This sequence belongs to the adenylosuccinate synthetase family. In terms of assembly, homodimer. It depends on Mg(2+) as a cofactor.

It localises to the cytoplasm. It carries out the reaction IMP + L-aspartate + GTP = N(6)-(1,2-dicarboxyethyl)-AMP + GDP + phosphate + 2 H(+). The protein operates within purine metabolism; AMP biosynthesis via de novo pathway; AMP from IMP: step 1/2. Plays an important role in the de novo pathway of purine nucleotide biosynthesis. Catalyzes the first committed step in the biosynthesis of AMP from IMP. This chain is Adenylosuccinate synthetase, found in Prochlorococcus marinus (strain MIT 9215).